Reading from the N-terminus, the 40-residue chain is Photosystem II reaction center protein J (40 aa).

A helical membrane pass occupies residues 8-28 (IPLWLIGTVAGILVLGLLGIF).

Belongs to the PsbJ family. As to quaternary structure, PSII is composed of 1 copy each of membrane proteins PsbA, PsbB, PsbC, PsbD, PsbE, PsbF, PsbH, PsbI, PsbJ, PsbK, PsbL, PsbM, PsbT, PsbX, PsbY, PsbZ, Psb30/Ycf12, at least 3 peripheral proteins of the oxygen-evolving complex and a large number of cofactors. It forms dimeric complexes.

It localises to the plastid. The protein localises to the chloroplast thylakoid membrane. Its function is as follows. One of the components of the core complex of photosystem II (PSII). PSII is a light-driven water:plastoquinone oxidoreductase that uses light energy to abstract electrons from H(2)O, generating O(2) and a proton gradient subsequently used for ATP formation. It consists of a core antenna complex that captures photons, and an electron transfer chain that converts photonic excitation into a charge separation. The chain is Photosystem II reaction center protein J from Physcomitrium patens (Spreading-leaved earth moss).